A 48-amino-acid chain; its full sequence is Delta-stichotoxin-Hcr1b (48 aa).

Disulfide bonds link cysteine 3-cysteine 43, cysteine 5-cysteine 33, and cysteine 26-cysteine 44.

It belongs to the sea anemone sodium channel inhibitory toxin family. Type II subfamily.

It localises to the secreted. The protein resides in the nematocyst. Binds to site 3 of voltage-gated sodium channels and inhibits the inactivation process. The sequence is that of Delta-stichotoxin-Hcr1b from Radianthus crispa (Leathery sea anemone).